Here is a 512-residue protein sequence, read N- to C-terminus: Kelch repeat protein C2 (512 aa).

Residues 2–67 form the BTB domain; it reads ESVIFSINGE…IRWKKINITI (66 aa). Kelch repeat units follow at residues 216-261, 262-307, 309-354, 356-403, 405-449, and 452-498; these read IKHN…LHNC, LYII…VNNG, LYVI…FVND, IYVM…EYDG, IYVI…SCGD, and LIIA…THKS.

This sequence belongs to the poxviruses Kelch family.

This chain is Kelch repeat protein C2, found in Homo sapiens (Human).